A 3015-amino-acid chain; its full sequence is Genome polyprotein (3015 aa).

N-acetylserine; by host is present on Ser-2. The segment at 2–23 (STLPKPQRKTKRNTNRRPMDVK) is interaction with STAT1. The tract at residues 2 to 58 (STLPKPQRKTKRNTNRRPMDVKFPGGGQIVGGVYLLPRRGPRLGVRATRKTSERSQP) is interaction with EIF2AK2/PKR. The tract at residues 2–59 (STLPKPQRKTKRNTNRRPMDVKFPGGGQIVGGVYLLPRRGPRLGVRATRKTSERSQPR) is interaction with DDX3X. Residues 2-75 (STLPKPQRKT…PKARQPIGRS (74 aa)) form a disordered region. At 2-168 (STLPKPQRKT…EDGVNYATGN (167 aa)) the chain is on the cytoplasmic side. 2 short sequence motifs (nuclear localization signal) span residues 5–13 (PKPQRKTKR) and 38–43 (PRRGPR). Basic residues predominate over residues 7–16 (PQRKTKRNTN). The span at 32 to 47 (GGVYLLPRRGPRLGVR) shows a compositional bias: low complexity. Position 53 is a phosphoserine; by host (Ser-53). Short sequence motifs (nuclear localization signal) lie at residues 58–64 (PRGRRQP) and 66–71 (PKARQP). Residues Ser-99 and Ser-116 each carry the phosphoserine; by host modification. Positions 112–152 (PRRRSRNLGKVIDTLTCGLADLMGYIPVLGGPLGGVAAALA) are important for endoplasmic reticulum and mitochondrial localization. Residues 122–173 (VIDTLTCGLADLMGYIPVLGGPLGGVAAALAHGVRAIEDGVNYATGNLPGCS) form an interaction with APOA2 region. The interval 164–167 (YATG) is important for lipid droplets localization. A helical membrane pass occupies residues 169–189 (LPGCSFSIFLLALLSCLTTPA). Positions 178-191 (LLALLSCLTTPASA) are cleaved as a propeptide — ER anchor for the core protein, removed in mature form by host signal peptidase. Over 190-358 (SAIQVRNASG…TGAHWGVLGA (169 aa)) the chain is Lumenal. 4 N-linked (GlcNAc...) asparagine; by host glycosylation sites follow: Asn-196, Asn-209, Asn-234, and Asn-250. Residues 265–296 (LVGAAAFCSAMYIGDLCGSVFLVGQLFTFRPK) are important for fusion. Asn-305 carries an N-linked (GlcNAc...) asparagine; by host glycan. The chain crosses the membrane as a helical span at residues 359–379 (LLYFSMVANWAKVIAVLFLFA). The Lumenal portion of the chain corresponds to 380 to 726 (GADATTYTGS…WEYVVLAFLV (347 aa)). The tract at residues 385-411 (TYTGSAVSSTTGAFVSLFSPGPTQNLQ) is HVR1. Residues Asn-416, Asn-422, and Asn-429 are each glycosylated (N-linked (GlcNAc...) (high mannose) asparagine; by host). 4 disulfide bridges follow: Cys-428–Cys-552, Cys-451–Cys-458, Cys-486–Cys-494, and Cys-503–Cys-508. The N-linked (GlcNAc...) asparagine; by host glycan is linked to Asn-447. The HVR2 stretch occupies residues 474–478 (VNISG). Residue Asn-475 is glycosylated (N-linked (GlcNAc...) asparagine; by host). The segment at 480 to 493 (SEDKPYCWHYAPRP) is CD81-binding 1. Asn-532 carries N-linked (GlcNAc...) asparagine; by host glycosylation. The tract at residues 544–551 (PPLGAWFG) is CD81-binding 2. Asn-556 carries an N-linked (GlcNAc...) asparagine; by host glycan. 4 cysteine pairs are disulfide-bonded: Cys-564–Cys-569, Cys-582–Cys-586, Cys-598–Cys-621, and Cys-608–Cys-645. N-linked (GlcNAc...) (high mannose) asparagine; by host glycosylation is found at Asn-624 and Asn-646. Cys-653 and Cys-678 form a disulfide bridge. Residues 661–672 (FEMSPLLFSTTQ) are PKR/eIF2-alpha phosphorylation homology domain (PePHD). A helical membrane pass occupies residues 727–747 (LADARVCACLWLMFLVGQAEA). Residues 748–758 (ALENVIVLNAA) lie on the Lumenal side of the membrane. Residues 759 to 779 (SAASCQGLLWGLIFICCAWHV) traverse the membrane as a helical segment. Residues 780-783 (RGRA) lie on the Cytoplasmic side of the membrane. A helical transmembrane segment spans residues 784 to 804 (VPVTTYALLQLWPLLLLILAL). Over 805–814 (PRRAYAFDSE) the chain is Lumenal. A helical membrane pass occupies residues 815–835 (QAASAGLLVLGLITIFTLTPA). Residues 836–882 (YKQLLISMLWWIQYFIALTEAQLHQWVPSLLVRGGRDAVILLACLFH) lie on the Cytoplasmic side of the membrane. A helical membrane pass occupies residues 883–903 (PQLGFEVTKILLALLGPLYLL). The Lumenal portion of the chain corresponds to 904–929 (QYSLLKTPYFVRAHILLRACMFFRGM). The Peptidase C18 domain occupies 904 to 1027 (QYSLLKTPYF…DVKGKGWRLL (124 aa)). The protease NS2-3 stretch occupies residues 905–1207 (YSLLKTPYFV…PVESMQSSQR (303 aa)). A lipid anchor (S-palmitoyl cysteine; by host) is attached at Cys-923. A helical membrane pass occupies residues 930-950 (ARGRYAQAILLRIGAWTGTYI). Residues 930–950 (ARGRYAQAILLRIGAWTGTYI) are interaction with host SCPS1. Topologically, residues 951–1658 (YDHLAPLSDW…CMSADLEVIT (708 aa)) are cytoplasmic. Catalysis depends on for protease NS2 activity; shared with dimeric partner residues His-953, Glu-973, and Cys-994. The Peptidase S29 domain occupies 1028–1209 (APITAYAQQT…ESMQSSQRSP (182 aa)). The active-site Charge relay system; for serine protease NS3 activity is Asp-1108. Cys-1124 and Cys-1126 together coordinate Zn(2+). The Charge relay system; for serine protease NS3 activity role is filled by Ser-1166. The Zn(2+) site is built by Cys-1172 and His-1176. The 153-residue stretch at 1218–1370 (PAVPQTYQVG…PNITESALPT (153 aa)) folds into the Helicase ATP-binding domain. 1231–1238 (APTGSGKS) is an ATP binding site. Residues Ser-1238 and Glu-1318 each coordinate Mg(2+). Residues 1317–1320 (DECH) carry the DECH box motif. The tract at residues 1487-1499 (QRRGRTGRGKHGV) is RNA-binding. The chain crosses the membrane as a helical span at residues 1659 to 1679 (STWVLVGGVVAALAAYCLSVG). Positions 1680-1691 (CVVICGRISTSG) are NS3-binding. The Cytoplasmic portion of the chain corresponds to 1680 to 1806 (CVVICGRIST…SLTSPLSTHQ (127 aa)). A helical membrane pass occupies residues 1807–1827 (TLLLNILGGWVASQLANPTAS). At 1828-1829 (TA) the chain is on the lumenal side. Residues 1830-1850 (FVVSGLAGAAVGSIGLGRVIV) form a helical membrane-spanning segment. Asp-1851 is a topological domain (cytoplasmic). The chain crosses the membrane as a helical span at residues 1852 to 1872 (VLAGYGAGVSGALVAFKIMCG). At 1873–1882 (ETPSAEDMVN) the chain is on the lumenal side. The helical transmembrane segment at 1883–1903 (LLPALLSPGALVVGVVCAAIL) threads the bilayer. Residues 1904–1973 (RRHAGPSEGA…WINTDWSTPC (70 aa)) lie on the Cytoplasmic side of the membrane. Cys-1973 is lipidated: S-palmitoyl cysteine; by host. Residues 1974–2003 (SSSWLRDIWDWVCEVLSDFKTWLKAKLVPA) lie within the membrane without spanning it. Over 2004-2994 (LPGVPFLSCQ…YHSASRARPR (991 aa)) the chain is Cytoplasmic. Zn(2+) contacts are provided by Cys-2012, Cys-2030, Cys-2032, and Cys-2053. Residues 2121–2209 (EFFTEVDGVR…ASSSASQLSA (89 aa)) form an FKBP8-binding region. The tract at residues 2121–2334 (EFFTEVDGVR…PIPPPRRKKV (214 aa)) is transcriptional activation. The segment at 2136 to 2140 (PRCKP) is interaction with non-structural protein 4A. Residues 2190–2442 (RLARGSPPSL…ALVTPCAAEE (253 aa)) form an interaction with host SKP2 region. Phosphoserine; by host occurs at positions 2195, 2198, 2202, 2205, 2208, and 2211. Positions 2211 to 2250 (SLKATCTMHGAHPDAELIEANLLWRQEMGGNITRVESENK) are ISDR. The interval 2211 to 2276 (SLKATCTMHG…REMSVPAECH (66 aa)) is interaction with EIF2AK2/PKR. The tract at residues 2250–2308 (KVVILDSFDPLVPEFEEREMSVPAECHRPRRPKFPPALPIWATPGYNPPVLETWKSPTY) is NS4B-binding. The V3 stretch occupies residues 2301–2378 (ETWKSPTYEP…PDHSTESSEH (78 aa)). 2 disordered regions span residues 2319-2338 (PPSGPPPIPPPRRKKVVQLD) and 2352-2413 (KTFE…SWST). The short motif at 2324–2327 (PPIP) is the SH3-binding element. A Nuclear localization signal motif is present at residues 2329–2337 (PRRKKVVQL). A Glycyl lysine isopeptide (Lys-Gly) (interchain with G-Cter in ubiquitin) cross-link involves residue Lys-2352. A compositionally biased stretch (polar residues) spans 2355-2365 (ETPSSPTTGYG). Positions 2368-2383 (QPDHSTESSEHDRDDG) are enriched in basic and acidic residues. 2 positions are modified to phosphoserine; by host: Ser-2453 and Ser-2466. Positions 2638 to 2756 (PMGFSYDTRC…VTESAGVNED (119 aa)) constitute a RdRp catalytic domain. 3 residues coordinate Mg(2+): Asp-2644, Asp-2742, and Asp-2743. A helical membrane pass occupies residues 2995–3015 (FLLLCLLLLSVGVGIFLLPAR).

The protein belongs to the hepacivirus polyprotein family. Homooligomer. Interacts with E1 (via C-terminus). Interacts with the non-structural protein 5A. Interacts (via N-terminus) with host STAT1 (via SH2 domain); this interaction results in decreased STAT1 phosphorylation and ubiquitin-mediated proteasome-dependent STAT1 degradation, leading to decreased IFN-stimulated gene transcription. Interacts with host STAT3; this interaction constitutively activates STAT3. Interacts with host LTBR receptor. Interacts with host TNFRSF1A receptor and possibly induces apoptosis. Interacts with host HNRPK. Interacts with host YWHAE. Interacts with host UBE3A/E6AP. Interacts with host DDX3X. Interacts with host APOA2. Interacts with host RXRA protein. Interacts with host SP110 isoform 3/Sp110b; this interaction sequesters the transcriptional corepressor SP110 away from the nucleus. Interacts with host CREB3 nuclear transcription protein; this interaction triggers cell transformation. Interacts with host ACY3. Interacts with host C1QR1. Interacts with host RBM24; this interaction, which enhances the interaction of the mature core protein with 5'-UTR, may inhibit viral translation and favor replication. Interacts with host EIF2AK2/PKR; this interaction induces the autophosphorylation of EIF2AK2. Part of the viral assembly initiation complex composed of NS2, E1, E2, NS3, NS4A, NS5A and the mature core protein. As to quaternary structure, forms a heterodimer with envelope glycoprotein E2. Interacts with mature core protein. Interacts with protease NS2. The heterodimer E1/E2 interacts with host CLDN1; this interaction plays a role in viral entry into host cell. Interacts with host SPSB2 (via C-terminus). Part of the viral assembly initiation complex composed of NS2, E1, E2, NS3, NS4A, NS5A and the mature core protein. Interacts with host NEURL3; this interaction prevents E1 binding to glycoprotein E2. In terms of assembly, forms a heterodimer with envelope glycoprotein E1. Interacts with host CD81 and SCARB1 receptors; these interactions play a role in viral entry into host cell. Interacts with host EIF2AK2/PKR; this interaction inhibits EIF2AK2 and probably allows the virus to evade the innate immune response. Interacts with host CD209/DC-SIGN and CLEC4M/DC-SIGNR. Interact with host SPCS1; this interaction is essential for viral particle assembly. Interacts with protease NS2. The heterodimer E1/E2 interacts with host CLDN1; this interaction plays a role in viral entry into host cell. Part of the viral assembly initiation complex composed of NS2, E1, E2, NS3, NS4A, NS5A and the mature core protein. Interacts with host SLC3A2/4F2hc; the interaction may facilitate viral entry into host cell. Interacts with human PLSCR1. Homohexamer. Homoheptamer. Interacts with protease NS2. As to quaternary structure, homodimer. Interacts with host SPCS1; this interaction is essential for viral particle assembly. Interacts with envelope glycoprotein E1. Interacts with envelope glycoprotein E2. Interacts with viroporin p7. Interacts with serine protease/helicase NS3. Part of the replication complex composed of NS2, NS3, NS4A, NS4B, NS5A and the RNA-directed RNA polymerase embedded in an ER-derived membranous web. Part of the viral assembly initiation complex composed of NS2, E1, E2, NS3, NS4A, NS5A and the mature core protein. In terms of assembly, interacts with protease NS2. Interacts with non-structural protein 4A; this interaction stabilizes the folding of NS3 serine protease. NS3-NS4A interaction is essential for NS3 activation and allows membrane anchorage of the latter. NS3/NS4A complex also prevents phosphorylation of host IRF3, thus preventing the establishment of dsRNA induced antiviral state. Interacts with host MAVS; this interaction leads to the cleavage and inhibition of host MAVS. Interacts with host TICAM1; this interaction leads to the cleavage and inhibition of host TICAM1. Interacts with host TANK-binding kinase/TBK1; this interaction results in the inhibition of the association between TBK1 and IRF3, which leads to the inhibition of IRF3 activation. Interacts with host RBM24. Part of the replication complex composed of NS2, NS3, NS4A, NS4B, NS5A and the RNA-directed RNA polymerase embedded in an ER-derived membranous web. Part of the viral assembly initiation complex composed of NS2, E1, E2, NS3, NS4A, NS5A and the mature core protein. Interacts with NS3 serine protease; this interaction stabilizes the folding of NS3 serine protease. NS3-NS4A interaction is essential for NS3 activation and allows membrane anchorage of the latter. Interacts with non-structural protein 5A (via N-terminus). Part of the replication complex composed of NS2, NS3, NS4A, NS4B, NS5A and the RNA-directed RNA polymerase embedded in an ER-derived membranous web. Part of the viral assembly initiation complex composed of NS2, E1, E2, NS3, NS4A, NS5A and the mature core protein. As to quaternary structure, homomultimer. Interacts with non-structural protein NS5A. Interacts with host PLA2G4C; this interaction likely initiates the recruitment of replication complexes to lipid droplets. Interacts with host STING; this interaction disrupts the interaction between STING and TBK1 thereby suppressing the interferon signaling. Part of the replication complex composed of NS2, NS3, NS4A, NS4B, NS5A and the RNA-directed RNA polymerase embedded in an ER-derived membranous web. In terms of assembly, monomer. Homodimer; dimerization is required for RNA-binding. Interacts with the mature core protein. Interacts (via N-terminus) with non-structural protein 4A. Interacts with non-structural protein 4B. Interacts (via region D2) with RNA-directed RNA polymerase. Part of the viral assembly initiation complex composed of NS2, E1, E2, NS3, NS4A, NS5A and the mature core protein. Part of the replication complex composed of NS2, NS3, NS4A, NS4B, NS5A and the RNA-directed RNA polymerase embedded in an ER-derived membranous web. Interacts with host GRB2. Interacts with host BIN1. Interacts with host PIK3R1. Interacts with host SRCAP. Interacts with host FKBP8. Interacts (via C-terminus) with host VAPB (via MSP domain). Interacts with host EIF2AK2/PKR; this interaction leads to disruption of EIF2AK2 dimerization by NS5A and probably allows the virus to evade the innate immune response. Interacts (via N-terminus) with host PACSIN2 (via N-terminus); this interaction attenuates protein kinase C alpha-mediated phosphorylation of PACSIN2 by disrupting the interaction between PACSIN2 and PRKCA. Interacts (via N-terminus) with host SRC kinase (via SH2 domain). Interacts with most Src-family kinases. Interacts with host IFI27 and SKP2; promotes the ubiquitin-mediated proteasomal degradation of NS5A. Interacts with host GPS2. Interacts with host TNFRSF21; this interaction allows the modulation by the virus of JNK, p38 MAPK, STAT3, and Akt signaling pathways in a DR6-dependent manner. Interacts (via N-terminus) with host CIDEB (via N-terminus); this interaction seems to regulate the association of HCV particles with APOE. Interacts with host CHKA/Choline Kinase-alpha; CHKA bridges host PI4KA and NS5A and potentiates NS5A-stimulated PI4KA activity, which then facilitates the targeting of the ternary complex to the ER for viral replication. Interacts with host SPSB2 (via C-terminus); this interaction targets NS5A for ubiquitination and degradation. Interacts with host RAB18; this interaction may promote the association of NS5A and other replicase components with lipid droplets. Interacts (via region D2) with host PPIA/CYPA; the interaction stimulates RNA-binding ability of NS5A and is dependent on the peptidyl-prolyl cis-trans isomerase activity of PPIA/CYPA. Interacts with host TRIM14; this interaction induces the degradation of NS5A. Homooligomer. Interacts with non-structural protein 5A. Interacts with host VAPB. Interacts with host PRK2/PKN2. Interacts with host HNRNPA1 and SEPT6; these interactions facilitate viral replication. Part of the replication complex composed of NS2, NS3, NS4A, NS4B, NS5A and the RNA-directed RNA polymerase. The cofactor is Zn(2+). Mg(2+) serves as cofactor. Post-translationally, specific enzymatic cleavages in vivo yield mature proteins. The structural proteins, core, E1, E2 and p7 are produced by proteolytic processing by host signal peptidases. The core protein precursor is synthesized as a 23 kDa, which is retained in the ER membrane through the hydrophobic signal peptide. Cleavage by the signal peptidase releases the 21 kDa mature core protein. The cleavage of the core protein precursor occurs between aminoacids 176 and 188 but the exact cleavage site is not known. Some degraded forms of the core protein appear as well during the course of infection. The other proteins (p7, NS2, NS3, NS4A, NS4B, NS5A and NS5B) are cleaved by the viral proteases. Autoprocessing between NS2 and NS3 is mediated by the NS2 cysteine protease catalytic domain and regulated by the NS3 N-terminal domain. Phosphorylated by host PKC and PKA. In terms of processing, ubiquitinated; mediated by UBE3A and leading to core protein subsequent proteasomal degradation. Post-translationally, highly N-glycosylated. Palmitoylation is required for NS2/3 autoprocessing and E2 recruitment to membranes. In terms of processing, palmitoylated. This modification may play a role in its polymerization or in protein-protein interactions. Post-translationally, phosphorylated on serines in a basal form termed p56. p58 is a hyperphosphorylated form of p56. p56 and p58 coexist in the cell in roughly equivalent amounts. Hyperphosphorylation is dependent on the presence of NS4A. Host CSNK1A1/CKI-alpha or RPS6KB1 kinases may be responsible for NS5A phosphorylation. Tyrosine phosphorylation is essential for the interaction with host SRC. In terms of processing, ubiquitinated. Ubiquitination, most probably at Lys-2352, mediated by host IFI27 and SKP2 leads to proteasomal degradation, restricting viral infection. Ubiquitination by host TRIM22 leads to interruption of viral replication. Post-translationally, the N-terminus is phosphorylated by host PRK2/PKN2.

It localises to the host endoplasmic reticulum membrane. Its subcellular location is the host mitochondrion membrane. The protein localises to the virion. It is found in the host cytoplasm. The protein resides in the host nucleus. It localises to the host lipid droplet. Its subcellular location is the virion membrane. The protein localises to the host mitochondrion. It is found in the host cell membrane. The protein resides in the host perinuclear region. The catalysed reaction is Hydrolysis of four peptide bonds in the viral precursor polyprotein, commonly with Asp or Glu in the P6 position, Cys or Thr in P1 and Ser or Ala in P1'.. The enzyme catalyses a ribonucleoside 5'-triphosphate + H2O = a ribonucleoside 5'-diphosphate + phosphate + H(+). It carries out the reaction ATP + H2O = ADP + phosphate + H(+). It catalyses the reaction RNA(n) + a ribonucleoside 5'-triphosphate = RNA(n+1) + diphosphate. Its activity is regulated as follows. Inhibited by the antiviral drug hexamethylene amiloride. Inhibition by amantadine appears to be genotype-dependent. Also inhibited by long-alkyl-chain iminosugar derivatives. With respect to regulation, activity is up-regulated by PRK2/PKN2-mediated phosphorylation. Packages viral RNA to form a viral nucleocapsid, and promotes virion budding. Participates in the viral particle production as a result of its interaction with the non-structural protein 5A. Binds RNA and may function as a RNA chaperone to induce the RNA structural rearrangements taking place during virus replication. Modulates viral translation initiation by interacting with viral IRES and 40S ribosomal subunit. Affects various cell signaling pathways, host immunity and lipid metabolism. Prevents the establishment of cellular antiviral state by blocking the interferon-alpha/beta (IFN-alpha/beta) and IFN-gamma signaling pathways and by blocking the formation of phosphorylated STAT1 and promoting ubiquitin-mediated proteasome-dependent degradation of STAT1. Activates STAT3 leading to cellular transformation. Regulates the activity of cellular genes, including c-myc and c-fos. May repress the promoter of p53, and sequester CREB3 and SP110 isoform 3/Sp110b in the cytoplasm. Represses cell cycle negative regulating factor CDKN1A, thereby interrupting an important check point of normal cell cycle regulation. Targets transcription factors involved in the regulation of inflammatory responses and in the immune response: suppresses TNF-induced NF-kappa-B activation, and activates AP-1. Binds to dendritic cells (DCs) via C1QR1, resulting in down-regulation of T-lymphocytes proliferation. Alters lipid metabolism by interacting with hepatocellular proteins involved in lipid accumulation and storage. Induces up-regulation of FAS promoter activity, and thereby contributes to the increased triglyceride accumulation in hepatocytes (steatosis). Its function is as follows. Forms a heterodimer with envelope glycoprotein E2, which mediates virus attachment to the host cell, virion internalization through clathrin-dependent endocytosis and fusion with host membrane. Fusion with the host cell is most likely mediated by both E1 and E2, through conformational rearrangements of the heterodimer required for fusion rather than a classical class II fusion mechanism. E1/E2 heterodimer binds host apolipoproteins such as APOB and ApoE thereby forming a lipo-viro-particle (LVP). APOE associated to the LVP allows the initial virus attachment to cell surface receptors such as the heparan sulfate proteoglycans (HSPGs), syndecan-1 (SDC1), syndecan-1 (SDC2), the low-density lipoprotein receptor (LDLR) and scavenger receptor class B type I (SCARB1). The cholesterol transfer activity of SCARB1 allows E2 exposure and binding of E2 to SCARB1 and the tetraspanin CD81. E1/E2 heterodimer binding on CD81 activates the epithelial growth factor receptor (EGFR) signaling pathway. Diffusion of the complex E1-E2-EGFR-SCARB1-CD81 to the cell lateral membrane allows further interaction with Claudin 1 (CLDN1) and occludin (OCLN) to finally trigger HCV entry. Functionally, forms a heterodimer with envelope glycoprotein E1, which mediates virus attachment to the host cell, virion internalization through clathrin-dependent endocytosis and fusion with host membrane. Fusion with the host cell is most likely mediated by both E1 and E2, through conformational rearrangements of the heterodimer required for fusion rather than a classical class II fusion mechanism. The interaction between envelope glycoprotein E2 and host apolipoprotein E/APOE allows the proper assembly, maturation and infectivity of the viral particles. This interaction is probably promoted via the up-regulation of cellular autophagy by the virus. E1/E2 heterodimer binds host apolipoproteins such as APOB and APOE thereby forming a lipo-viro-particle (LVP). APOE associated to the LVP allows the initial virus attachment to cell surface receptors such as the heparan sulfate proteoglycans (HSPGs), syndecan-1 (SDC1), syndecan-1 (SDC2), the low-density lipoprotein receptor (LDLR) and scavenger receptor class B type I (SCARB1). The cholesterol transfer activity of SCARB1 allows E2 exposure and binding of E2 to SCARB1 and the tetraspanin CD81. E1/E2 heterodimer binding on CD81 activates the epithelial growth factor receptor (EGFR) signaling pathway. Diffusion of the complex E1-E2-EGFR-SCARB1-CD81 to the cell lateral membrane allows further interaction with Claudin 1 (CLDN1) and occludin (OCLN) to finally trigger HCV entry. Inhibits host EIF2AK2/PKR activation, preventing the establishment of an antiviral state. Viral ligand for CD209/DC-SIGN and CLEC4M/DC-SIGNR, which are respectively found on dendritic cells (DCs), and on liver sinusoidal endothelial cells and macrophage-like cells of lymph node sinuses. These interactions allow the capture of circulating HCV particles by these cells and subsequent facilitated transmission to permissive cells such as hepatocytes and lymphocyte subpopulations. The interaction between E2 and host amino acid transporter complex formed by SLC3A2 and SLC7A5/LAT1 may facilitate viral entry into host cell. In terms of biological role, ion channel protein that acts as a viroporin and plays an essential role in the assembly, envelopment and secretion of viral particles. Regulates the host cell secretory pathway, which induces the intracellular retention of viral glycoproteins and favors assembly of viral particles. Creates a pore in acidic organelles and releases Ca(2+) and H(+) in the cytoplasm of infected cells, leading to a productive viral infection. High levels of cytoplasmic Ca(2+) may trigger membrane trafficking and transport of viral ER-associated proteins to viroplasms, sites of viral genome replication. This ionic imbalance induces the assembly of the inflammasome complex, which triggers the maturation of pro-IL-1beta into IL-1beta through the action of caspase-1. Targets also host mitochondria and induces mitochondrial depolarization. In addition of its role as a viroporin, acts as a lipid raft adhesion factor. Cysteine protease required for the proteolytic auto-cleavage between the non-structural proteins NS2 and NS3. The N-terminus of NS3 is required for the function of NS2 protease (active region NS2-3). Promotes the initiation of viral particle assembly by mediating the interaction between structural and non-structural proteins. Its function is as follows. Displays three enzymatic activities: serine protease with a chymotrypsin-like fold, NTPase and RNA helicase. NS3 serine protease, in association with NS4A, is responsible for the cleavages of NS3-NS4A, NS4A-NS4B, NS4B-NS5A and NS5A-NS5B. The NS3/NS4A complex prevents phosphorylation of host IRF3, thus preventing the establishment of dsRNA induced antiviral state. The NS3/NS4A complex induces host amino acid transporter component SLC3A2, thus contributing to HCV propagation. NS3 RNA helicase binds to RNA and unwinds both dsDNA and dsRNA in the 3' to 5' direction, and likely resolves RNA complicated stable secondary structures in the template strand. Binds a single ATP and catalyzes the unzipping of a single base pair of dsRNA. Inhibits host antiviral proteins TBK1 and IRF3 thereby preventing the establishment of an antiviral state. Cleaves host MAVS/CARDIF thereby preventing the establishment of an antiviral state. Cleaves host TICAM1/TRIF, thereby disrupting TLR3 signaling and preventing the establishment of an antiviral state. Functionally, peptide cofactor which forms a non-covalent complex with the N-terminal of NS3 serine protease. The NS3/NS4A complex prevents phosphorylation of host IRF3, thus preventing the establishment of dsRNA induced antiviral state. The NS3/NS4A complex induces host amino acid transporter component SLC3A2, thus contributing to HCV propagation. In terms of biological role, induces a specific membrane alteration that serves as a scaffold for the virus replication complex. This membrane alteration gives rise to the so-called ER-derived membranous web that contains the replication complex. NS4B self-interaction contributes to its function in membranous web formation. Promotes host TRIF protein degradation in a CASP8-dependent manner thereby inhibiting host TLR3-mediated interferon signaling. Disrupts the interaction between STING and TBK1 contributing to the inhibition of interferon signaling. Phosphorylated protein that is indispensable for viral replication and assembly. Both hypo- and hyperphosphorylated states are required for the viral life cycle. The hyperphosphorylated form of NS5A is an inhibitor of viral replication. Involved in RNA-binding and especially in binding to the viral genome. Zinc is essential for RNA-binding. Participates in the viral particle production as a result of its interaction with the mature viral core protein. Its interaction with host VAPB may target the viral replication complex to vesicles. Down-regulates viral IRES translation initiation. Mediates interferon resistance, presumably by interacting with and inhibiting host EIF2AK2/PKR. Prevents BIN1-induced apoptosis. Acts as a transcriptional activator of some host genes important for viral replication when localized in the nucleus. Via the interaction with host PACSIN2, modulates lipid droplet formation in order to promote virion assembly. Modulates TNFRSF21/DR6 signaling pathway for viral propagation. Its function is as follows. RNA-dependent RNA polymerase that performs primer-template recognition and RNA synthesis during viral replication. Initiates RNA transcription/replication at a flavin adenine dinucleotide (FAD), resulting in a 5'- FAD cap on viral RNAs. In this way, recognition of viral 5' RNA by host pattern recognition receptors can be bypassed, thereby evading activation of antiviral pathways. The sequence is that of Genome polyprotein from Hepatitis C virus genotype 6h (isolate VN004) (HCV).